Consider the following 201-residue polypeptide: Coat protein (201 aa).

This sequence belongs to the potexvirus capsid protein family.

The protein resides in the virion. Its function is as follows. Required for genome encapsidation. Forms ribonucleoprotein complexes along with TGB1 helicase and viral RNA. The protein is Coat protein of Lilium formosanum.